The primary structure comprises 463 residues: Proton-coupled folate transporter (463 aa).

Topologically, residues 1–27 (MVSPDDSPEIRDRPRPRRCLLPASVTV) are cytoplasmic. Residues 28–46 (EPVIFLSMFALALQGPLAT) form a helical membrane-spanning segment. Residues 47–86 (QYLWDRLSADIGFNGTRTVGCAMNGSKSAGPEQQEVETLT) are Extracellular-facing. N-linked (GlcNAc...) asparagine glycans are attached at residues asparagine 60 and asparagine 70. A disulfide bond links cysteine 67 and cysteine 302. A helical membrane pass occupies residues 87–112 (AHWSLYINLGGFLVGLFSVMLLGPWS). The Cytoplasmic segment spans residues 113–116 (DKVG). A helical membrane pass occupies residues 117–139 (RRPVLMLPCIGLALQAAVYLLVM). At 140–144 (YQELH) the chain is on the extracellular side. A helical transmembrane segment spans residues 145–158 (VGYFLIGRFISGIS). The Cytoplasmic portion of the chain corresponds to 159–181 (GDFNMILAGCFAYIADVSDRQSR). Residues aspartate 160 and glutamate 189 each contribute to the H(+) site. The helical transmembrane segment at 182-207 (TFRVAVLEACLGIAGMVASIIGGHWR) threads the bilayer. Residues 208-212 (KAQGY) lie on the Extracellular side of the membrane. A helical membrane pass occupies residues 213–231 (INPFWLVFAVNLFTALYVY). The Cytoplasmic segment spans residues 232 to 270 (FCVEESVKDKKPARLFTHRHYQSFFRLFTVQGENNRRRK). The chain crosses the membrane as a helical span at residues 271–293 (LFLYSLALLVVVTVHMGAKNLFV). Residue histidine 285 coordinates H(+). The Extracellular segment spans residues 294 to 306 (LYELSYPLCWDSD). Residues 307 to 329 (LIGYGSAAEHLTYLSSLAGLRLF) form a helical membrane-spanning segment. Topologically, residues 330–335 (QLCLAD) are cytoplasmic. The helical transmembrane segment at 336-355 (SWVAEMGFISNISGLVVISL) threads the bilayer. The Extracellular portion of the chain corresponds to 356-359 (ASTT). A helical membrane pass occupies residues 360 to 380 (PIMFTGYGLRFFAMATTPVIR). Residues 381 to 392 (SKLSKMVEEGEQ) lie on the Cytoplasmic side of the membrane. Residues 393 to 418 (GALFSSVACVEGLSFLLATGLFNSLY) traverse the membrane as a helical segment. At 419–426 (PATLHFMK) the chain is on the extracellular side. The chain crosses the membrane as a helical span at residues 427-445 (GFPFLLGALLLLIPAGIIG). Residues 446–463 (LIEVCEQKPMYSQFSEIS) are Cytoplasmic-facing.

It belongs to the major facilitator superfamily. SLC46A family. In terms of assembly, monomer.

It is found in the cell membrane. The protein localises to the apical cell membrane. Its subcellular location is the basolateral cell membrane. It localises to the endosome membrane. The protein resides in the cytoplasm. The catalysed reaction is folate(in) + H(+)(in) = folate(out) + H(+)(out). The enzyme catalyses (6S)-5-methyl-5,6,7,8-tetrahydrofolate(in) + H(+)(in) = (6S)-5-methyl-5,6,7,8-tetrahydrofolate(out) + H(+)(out). It carries out the reaction methotrexate(in) + H(+)(in) = methotrexate(out) + H(+)(out). It catalyses the reaction pemetrexed(in) + H(+)(in) = pemetrexed(out) + H(+)(out). Its function is as follows. Proton-coupled folate symporter that mediates folate absorption using an H(+) gradient as a driving force. Involved in the intestinal absorption of folates at the brush-border membrane of the proximal jejunum, and the transport from blood to cerebrospinal fluid across the choroid plexus. Functions at acidic pH via alternate outward- and inward-open conformation states. Protonation of residues in the outward open state primes the protein for transport. Binding of folate promotes breaking of salt bridge network and subsequent closure of the extracellular gate, leading to the inward-open state and release of protons and folate. Also able to transport antifolate drugs, such as methotrexate and pemetrexed. Also acts as a lower-affinity, pH-independent heme carrier protein and constitutes the main importer of heme in the intestine. Imports heme in the retina and retinal pigment epithelium, in neurons of the hippocampus, in hepatocytes and in the renal epithelial cells. The chain is Proton-coupled folate transporter from Xenopus laevis (African clawed frog).